The following is a 367-amino-acid chain: Aminomethyltransferase (367 aa).

It belongs to the GcvT family. As to quaternary structure, the glycine cleavage system is composed of four proteins: P, T, L and H.

The catalysed reaction is N(6)-[(R)-S(8)-aminomethyldihydrolipoyl]-L-lysyl-[protein] + (6S)-5,6,7,8-tetrahydrofolate = N(6)-[(R)-dihydrolipoyl]-L-lysyl-[protein] + (6R)-5,10-methylene-5,6,7,8-tetrahydrofolate + NH4(+). In terms of biological role, the glycine cleavage system catalyzes the degradation of glycine. The polypeptide is Aminomethyltransferase (Mycobacterium leprae (strain Br4923)).